Here is a 682-residue protein sequence, read N- to C-terminus: Transcription activator of gluconeogenesis PODANS_4_8760 (682 aa).

The interval 1 to 72 is disordered; sequence MPEDGGPFGS…KDPLRPRRKK (72 aa). Residues 9 to 21 show a composition bias toward low complexity; sequence GSEAAEASGAMSE. Composition is skewed to basic and acidic residues over residues 29 to 41 and 54 to 67; these read HEPHHKDEDDRMS and GEVKKKYDPKDPLR. A DNA-binding region (zn(2)-C6 fungal-type) is located at residues 77–105; that stretch reads CYACQRAHLTCGDERPCQRCIKRGLQDSC. 5 disordered regions span residues 122 to 148, 181 to 211, 325 to 375, 509 to 541, and 586 to 622; these read EALRPVLGPNYNPNAPSSRHGGQRHHS, LTESLPFNSQQSPVSPTFQQTSSNPPISGMV, PAGP…RPSK, NRNTNLGGTGVRTTPRLKSLNESSAENGGAASG, and TDKPAAGGGGGAGEEERKPDPSAAPRQQEKDSRHSIL. Composition is skewed to polar residues over residues 185 to 206, 329 to 345, and 354 to 373; these read LPFNSQQSPVSPTFQQTSSNPP, TSLQSPSTENNSPQPTT, and PTMSQYPNAPGAKSSSNSRP.

It belongs to the ERT1/acuK family.

The protein resides in the nucleus. In terms of biological role, transcription factor which regulates nonfermentable carbon utilization. Activator of gluconeogenetic genes. The sequence is that of Transcription activator of gluconeogenesis PODANS_4_8760 from Podospora anserina (strain S / ATCC MYA-4624 / DSM 980 / FGSC 10383) (Pleurage anserina).